A 429-amino-acid chain; its full sequence is Fez family zinc finger protein 1 (429 aa).

The short motif at 29–44 (PLAFSIERIMARTPEP) is the Engrailed homology 1 repressor element. 6 C2H2-type zinc fingers span residues 247-269 (FTCEVCGKVFNAHYNLTRHMPVH), 275-297 (FVCKVCGKGFRQASTLCRHKIIH), 303-325 (HKCNQCGKAFNRSSTLNTHTRIH), 331-353 (FICEFCGKGFHQKGNYKNHKLTH), 359-381 (FKCNICNKAFHQVYNLTFHMHTH), and 387-410 (FTCPTCGKGFCRNFDLKKHIRKLH). Positions 409–429 (LHDISPGPHSPPTPTGNTEGQ) are disordered.

This sequence belongs to the krueppel C2H2-type zinc-finger protein family.

The protein resides in the nucleus. Transcription repressor. Involved in the development of the forebrain region. The polypeptide is Fez family zinc finger protein 1 (fezf1) (Danio rerio (Zebrafish)).